A 190-amino-acid polypeptide reads, in one-letter code: uncharacterized protein (190 aa).

The helical transmembrane segment at 12–34 threads the bilayer; the sequence is LLGLSIFLTTFLFVANFLPGIFA.

It localises to the membrane. This is an uncharacterized protein from Archaeoglobus fulgidus (strain ATCC 49558 / DSM 4304 / JCM 9628 / NBRC 100126 / VC-16).